The sequence spans 299 residues: DNA-binding transcriptional repressor CapW (299 aa).

Residues 1-15 (MPDNFREGDKQDSQK) are compositionally biased toward basic and acidic residues. Positions 1–21 (MPDNFREGDKQDSQKGRQGAR) are disordered. The interval 1-95 (MPDNFREGDK…LFQPVYMTSS (95 aa)) is winged HTH domain. The interval 96–207 (LECYLNDLLQ…LSRIVQAQNA (112 aa)) is WYL domain. The WYL domain occupies 131–211 (LRRLDTDVVS…VQAQNAGPDE (81 aa)). The segment at 156–200 (YQSMSDPQGSKRTLTPHSLVHDGYRWHTRAWCHKRGEYRDFLLSR) is probable ligand-binding region. Residues 208-299 (GPDEERANGD…KDEIYALLKQ (92 aa)) are WCX domain.

Homodimer.

In terms of biological role, transcriptional regulator of a CBASS antivirus system. CBASS (cyclic oligonucleotide-based antiphage signaling system) provides immunity against bacteriophage. The CD-NTase protein synthesizes cyclic nucleotides in response to infection; these serve as specific second messenger signals. The signals activate a diverse range of effectors, leading to bacterial cell death and thus abortive phage infection. A type III CBASS system. Expression of this CBASS system (Cap18-Cap6-Cap7-CdnC-CapW-Cap17) in a susceptible E.coli (strain MG1655) confers resistance to bacteriophage P1. Binds specifically to and represses expression from the CBASS promoter, found between the genes for divergently transcribed capW and cdnC. In Escherichia coli (strain KTE188), this protein is DNA-binding transcriptional repressor CapW.